A 495-amino-acid chain; its full sequence is Mothers against decapentaplegic homolog 6 (495 aa).

Positions 1 to 15 (MFRSKRSGLVRRLWR) are enriched in basic residues. Disordered regions lie at residues 1-115 (MFRS…PGWL) and 133-161 (AAGA…RSRE). Dimethylated arginine; alternate occurs at positions 74 and 81. Omega-N-methylarginine; alternate is present on residues Arg74 and Arg81. Residues 149 to 276 (PEPEEGGGPR…FSRLCGPESP (128 aa)) enclose the MH1 domain. Lys174 is covalently cross-linked (Glycyl lysine isopeptide (Lys-Gly) (interchain with G-Cter in ubiquitin)). Positions 206, 248, 261, and 266 each coordinate Zn(2+). Positions 332 to 495 (WCSVAYWEHR…WLEILLNNHR (164 aa)) constitute an MH2 domain. Residue Ser436 is modified to Phosphoserine; by PRKX; in vitro.

Belongs to the dwarfin/SMAD family. Interacts with NEDD4L. Interacts with WWP1. Interacts with STAMBP and PRKX. Interacts with RNF111 and AXIN1. Interacts with TGF-beta type I receptor superfamily members, including ACVR1B, BMPR1B and TGFBR1. In response to BMP2 treatment, interacts with SMAD1; this interaction may inhibit SMAD1-binding to SMAD4. Interacts with HOXC8 and HOXC9. Interacts with PELI1; this interaction interferes with PELI1 complex formation with TRAF6, IRAK1, IRAK4 and MYD88 in response to IL1B and hence negatively regulates IL1R-TLR signaling. Interacts with TSC22D1/TSC-22. Monoubiquitinated at Lys-174 by the E2/E3 hybrid ubiquitin-protein ligase UBE2O, leading to reduced binding affinity for the activated BMP type I receptor ACVR1/ALK2, thereby enhancing BMP7 and regulating adipocyte differentiation. Ubiquitinated by WWP1. Ubiquitinated by ARK2C, promoting proteasomal degradation, leading to enhance the BMP-Smad signaling. Post-translationally, arginine methylation by PRMT1, which is recruited by BMPR2, initiates BMP-Induced signaling and induces dissociation from the BMPR1B receptor at the cell surface leading to derepress downstream Smad1/Smad5 signaling. In terms of processing, phosphorylated by BMP type 1 receptor kinase and by PRKX. In terms of tissue distribution, ubiquitous in various organs, with higher levels in lung.

The protein localises to the nucleus. In terms of biological role, transforming growth factor-beta superfamily receptors signaling occurs through the Smad family of intracellular mediators. SMAD6 is an inhibitory Smad (i-Smad) that negatively regulates signaling downstream of type I transforming growth factor-beta. Acts as a mediator of TGF-beta and BMP anti-inflammatory activities. Suppresses IL1R-TLR signaling through its direct interaction with PEL1, preventing NF-kappa-B activation, nuclear transport and NF-kappa-B-mediated expression of pro-inflammatory genes. Blocks the BMP-SMAD1 signaling pathway by competing with SMAD4 for receptor-activated SMAD1-binding. Binds to regulatory elements in target promoter regions. The chain is Mothers against decapentaplegic homolog 6 (Smad6) from Mus musculus (Mouse).